Reading from the N-terminus, the 1723-residue chain is Lys-gingipain (1723 aa).

An N-terminal signal peptide occupies residues 1-24 (MRKLLLLIAASLLGVGLYAQSAKI). Positions 25–228 (KLDAPTTRTT…ETAYKQLFNR (204 aa)) are excised as a propeptide. Positions 313, 337, 339, 341, and 343 each coordinate Ca(2+). The active-site Proton donor is the H444. C477 functions as the Nucleophile in the catalytic mechanism. Ca(2+) is bound by residues F482 and E491. Positions 964–985 (WDAPNGTPNPNPNPNPGTTTLS) are disordered. S987, E989, D1000, D1002, D1004, H1006, S1021, G1023, N1042, D1145, E1146, D1430, E1432, D1444, D1446, D1448, N1450, S1480, N1495, and D1585 together coordinate Ca(2+).

The protein belongs to the peptidase C25 family. In terms of processing, proteolytically cleaved into a catalytic subunit and three adhesins. Arg-gingipain is involved in this post-translational processing.

It localises to the secreted. It carries out the reaction Endopeptidase with strict specificity for lysyl bonds.. Activated by the thiol-reducing agents cysteine, 2-mercaptoethanol and dithiothreitol. Inhibited by iodacetamide, iodoacetic acid, leupeptin, tosyl-L-lysine and tosyl-L-phenylalanine. Not inhibited by elastatinal, chymostatin, cystatins, alpha1-antichymotrypsin or the serine protease inhibitors phenylmethylsulfonyl fluoride and diisopropylfluorophosphate. Not inhibited by metal ion chelators. Inhibited by the heavy metal ions Fe(3+), Zn(2+), Cu(2+) and Mn(2+). Functionally, cysteine proteinase with a strong preference for substrates with Lys in the P1 position. Hydrolyzes bovine hemoglobin, bovine serum albumin, casein, human placental type I collagen and human IgA and IgG. Disrupts the functions of polymorphonuclear leukocytes. May act as a virulence factor in the development of peridontal disease. Involved in the coaggregation of P.gingivalis with other oral bacteria. The chain is Lys-gingipain from Porphyromonas gingivalis (strain ATCC 33277 / DSM 20709 / CIP 103683 / JCM 12257 / NCTC 11834 / 2561).